Here is a 135-residue protein sequence, read N- to C-terminus: Nitrogen fixation protein NifU 1 (135 aa).

The segment covering 1–10 has biased composition (basic and acidic residues); the sequence is MRDMQDDDTK. The segment at 1–29 is disordered; that stretch reads MRDMQDDDTKSPAPPPAAAAAARRAAGQA. The span at 18-29 shows a compositional bias: low complexity; it reads AAAAARRAAGQA.

It belongs to the NifU family.

Its function is as follows. May be involved in the formation or repair of [Fe-S] clusters present in iron-sulfur proteins. This Rhodobacter capsulatus (Rhodopseudomonas capsulata) protein is Nitrogen fixation protein NifU 1 (nifU1).